The chain runs to 507 residues: ATP synthase subunit alpha (507 aa).

Residue 168-175 (GDRKTGKT) participates in ATP binding.

This sequence belongs to the ATPase alpha/beta chains family. In terms of assembly, F-type ATPases have 2 components, CF(1) - the catalytic core - and CF(0) - the membrane proton channel. CF(1) has five subunits: alpha(3), beta(3), gamma(1), delta(1), epsilon(1). CF(0) has three main subunits: a(1), b(2) and c(9-12). The alpha and beta chains form an alternating ring which encloses part of the gamma chain. CF(1) is attached to CF(0) by a central stalk formed by the gamma and epsilon chains, while a peripheral stalk is formed by the delta and b chains.

It localises to the cell inner membrane. The enzyme catalyses ATP + H2O + 4 H(+)(in) = ADP + phosphate + 5 H(+)(out). Functionally, produces ATP from ADP in the presence of a proton gradient across the membrane. The alpha chain is a regulatory subunit. This Ehrlichia ruminantium (strain Gardel) protein is ATP synthase subunit alpha.